The sequence spans 515 residues: Maturase K (515 aa).

The protein belongs to the intron maturase 2 family. MatK subfamily.

Its subcellular location is the plastid. It localises to the chloroplast. Its function is as follows. Usually encoded in the trnK tRNA gene intron. Probably assists in splicing its own and other chloroplast group II introns. The sequence is that of Maturase K from Pinus koraiensis (Korean pine).